Reading from the N-terminus, the 520-residue chain is GMP synthase [glutamine-hydrolyzing] (520 aa).

A Glutamine amidotransferase type-1 domain is found at 9–202; sequence KILILDFGSQ…VRQICGCTGQ (194 aa). Cys-86 serves as the catalytic Nucleophile. Active-site residues include His-176 and Glu-178. The region spanning 203–395 is the GMPS ATP-PPase domain; that stretch reads WTPGQIIEDA…LGLPHPMVYR (193 aa). 230 to 236 provides a ligand contact to ATP; the sequence is SGGVDSS.

Homodimer.

It carries out the reaction XMP + L-glutamine + ATP + H2O = GMP + L-glutamate + AMP + diphosphate + 2 H(+). It participates in purine metabolism; GMP biosynthesis; GMP from XMP (L-Gln route): step 1/1. Functionally, catalyzes the synthesis of GMP from XMP. This Syntrophotalea carbinolica (strain DSM 2380 / NBRC 103641 / GraBd1) (Pelobacter carbinolicus) protein is GMP synthase [glutamine-hydrolyzing].